Here is a 429-residue protein sequence, read N- to C-terminus: MTDRSAAPINASLKAADPAIAGLIDQEQMRQETHLELIASENFTSKAVMEAQGSVLTNKYAEGLPHKRYYGGCEHVDAIEELAITRAKQLFGAAWANVQPHSGAQANFAVFLALLQPGDTILGMDLSHGGHLTHGSPVNVSGKWFNVVQYGVDKETQRLDMEAIRKLALEHKPKLIICGYSAYPRSIDFAAFRSIADEVGAYLLADMAHIAGLVAAGVHASPVPHCDVVTTTTHKTLRGPRGGLILCRDAEFARRFDKAVFPGSQGGPLEHVIAAKAVAFGEALQPDFKAYSRQVVANAQALAARLQERKIDVVSGGTDNHVVLLDLRSIGMTGKVADLLVSDVHITANKNTVPFDPESPFVTSGLRLGTAALTTRGFDEKAFHEVADVIADRLQNPEDDAIQARCLERVSDLCKRFPLYAPALEPALA.

Residues Leu-126 and 130-132 (GHL) each bind (6S)-5,6,7,8-tetrahydrofolate. Lys-235 is subject to N6-(pyridoxal phosphate)lysine. 359–361 (SPF) serves as a coordination point for (6S)-5,6,7,8-tetrahydrofolate.

This sequence belongs to the SHMT family. As to quaternary structure, homodimer. Pyridoxal 5'-phosphate is required as a cofactor.

The protein resides in the cytoplasm. It carries out the reaction (6R)-5,10-methylene-5,6,7,8-tetrahydrofolate + glycine + H2O = (6S)-5,6,7,8-tetrahydrofolate + L-serine. The protein operates within one-carbon metabolism; tetrahydrofolate interconversion. It functions in the pathway amino-acid biosynthesis; glycine biosynthesis; glycine from L-serine: step 1/1. Functionally, catalyzes the reversible interconversion of serine and glycine with tetrahydrofolate (THF) serving as the one-carbon carrier. This reaction serves as the major source of one-carbon groups required for the biosynthesis of purines, thymidylate, methionine, and other important biomolecules. Also exhibits THF-independent aldolase activity toward beta-hydroxyamino acids, producing glycine and aldehydes, via a retro-aldol mechanism. The polypeptide is Serine hydroxymethyltransferase (Synechococcus sp. (strain CC9311)).